The sequence spans 66 residues: Large ribosomal subunit protein bL35 (66 aa).

This sequence belongs to the bacterial ribosomal protein bL35 family.

The protein is Large ribosomal subunit protein bL35 of Azorhizobium caulinodans (strain ATCC 43989 / DSM 5975 / JCM 20966 / LMG 6465 / NBRC 14845 / NCIMB 13405 / ORS 571).